The following is a 102-amino-acid chain: Small ribosomal subunit protein uS10 (102 aa).

The protein belongs to the universal ribosomal protein uS10 family. In terms of assembly, part of the 30S ribosomal subunit.

In terms of biological role, involved in the binding of tRNA to the ribosomes. This is Small ribosomal subunit protein uS10 from Staphylococcus aureus (strain JH9).